The sequence spans 492 residues: Probable malate:quinone oxidoreductase 1 (492 aa).

The protein belongs to the MQO family. It depends on FAD as a cofactor.

It carries out the reaction (S)-malate + a quinone = a quinol + oxaloacetate. It participates in carbohydrate metabolism; tricarboxylic acid cycle; oxaloacetate from (S)-malate (quinone route): step 1/1. In Staphylococcus epidermidis (strain ATCC 12228 / FDA PCI 1200), this protein is Probable malate:quinone oxidoreductase 1.